The chain runs to 209 residues: Imidazole glycerol phosphate synthase subunit HisH (209 aa).

One can recognise a Glutamine amidotransferase type-1 domain in the interval 1-205 (MIAIIDYGMG…KGVVETWKSS (205 aa)). Cys79 functions as the Nucleophile in the catalytic mechanism. Catalysis depends on residues His180 and Glu182.

In terms of assembly, heterodimer of HisH and HisF.

It localises to the cytoplasm. The enzyme catalyses 5-[(5-phospho-1-deoxy-D-ribulos-1-ylimino)methylamino]-1-(5-phospho-beta-D-ribosyl)imidazole-4-carboxamide + L-glutamine = D-erythro-1-(imidazol-4-yl)glycerol 3-phosphate + 5-amino-1-(5-phospho-beta-D-ribosyl)imidazole-4-carboxamide + L-glutamate + H(+). It carries out the reaction L-glutamine + H2O = L-glutamate + NH4(+). Its pathway is amino-acid biosynthesis; L-histidine biosynthesis; L-histidine from 5-phospho-alpha-D-ribose 1-diphosphate: step 5/9. Its function is as follows. IGPS catalyzes the conversion of PRFAR and glutamine to IGP, AICAR and glutamate. The HisH subunit catalyzes the hydrolysis of glutamine to glutamate and ammonia as part of the synthesis of IGP and AICAR. The resulting ammonia molecule is channeled to the active site of HisF. This is Imidazole glycerol phosphate synthase subunit HisH from Bacillus thuringiensis subsp. konkukian (strain 97-27).